The sequence spans 252 residues: Protein PYRAB15930 (252 aa).

The protein belongs to the CinA family.

The polypeptide is Protein PYRAB15930 (Pyrococcus abyssi (strain GE5 / Orsay)).